Reading from the N-terminus, the 223-residue chain is MKKNKFQIKREATFESFIDAGVNLLIDRAYDPVSVEDISRAAGYSKGAFYVHFVSKDDFLLYLLEKRQMKKKIIIGYLDQMERESVKSLTLDEAAKHAAELLYSYYINKPSWDITSFAMNMPTYKVLKKCKAYVRLYELWVEENVLYIKWLKERKLIDACIDPEYTAKIICAVLDGIIKQSYVLGQPATFRSFLDALSVFFTLDREHERPRILKSFSESEEHQ.

Residues 11 to 71 (EATFESFIDA…YLLEKRQMKK (61 aa)) form the HTH tetR-type domain. A DNA-binding region (H-T-H motif) is located at residues 34-53 (SVEDISRAAGYSKGAFYVHF).

This is an uncharacterized protein from Bacillus subtilis (strain 168).